Consider the following 104-residue polypeptide: L-rhamnose mutarotase (104 aa).

Residue Tyr-18 participates in substrate binding. His-22 (proton donor) is an active-site residue. Residues Tyr-41 and 76–77 (WW) contribute to the substrate site.

This sequence belongs to the rhamnose mutarotase family. In terms of assembly, homodimer.

Its subcellular location is the cytoplasm. The enzyme catalyses alpha-L-rhamnose = beta-L-rhamnose. It functions in the pathway carbohydrate metabolism; L-rhamnose metabolism. Its function is as follows. Involved in the anomeric conversion of L-rhamnose. The protein is L-rhamnose mutarotase of Shigella sonnei (strain Ss046).